We begin with the raw amino-acid sequence, 278 residues long: Large ribosomal subunit protein uL2 (278 aa).

3 disordered regions span residues M1–D20, T25–H58, and G223–R278. Positions L37–H58 are enriched in basic residues. Over residues P253–I268 the composition is skewed to basic and acidic residues. The segment covering V269–R278 has biased composition (basic residues).

It belongs to the universal ribosomal protein uL2 family. In terms of assembly, part of the 50S ribosomal subunit. Forms a bridge to the 30S subunit in the 70S ribosome.

Functionally, one of the primary rRNA binding proteins. Required for association of the 30S and 50S subunits to form the 70S ribosome, for tRNA binding and peptide bond formation. It has been suggested to have peptidyltransferase activity; this is somewhat controversial. Makes several contacts with the 16S rRNA in the 70S ribosome. The protein is Large ribosomal subunit protein uL2 of Mycolicibacterium smegmatis (strain ATCC 700084 / mc(2)155) (Mycobacterium smegmatis).